The following is a 481-amino-acid chain: Cysteine--tRNA ligase (481 aa).

Residue Cys43 participates in Zn(2+) binding. A 'HIGH' region motif is present at residues 45–55 (ATVQGLPHIGH). Zn(2+)-binding residues include Cys221, His246, and Glu250. The 'KMSKS' region signature appears at 277–281 (KMSKS). Lys280 contributes to the ATP binding site.

It belongs to the class-I aminoacyl-tRNA synthetase family. As to quaternary structure, monomer. The cofactor is Zn(2+).

The protein localises to the cytoplasm. It carries out the reaction tRNA(Cys) + L-cysteine + ATP = L-cysteinyl-tRNA(Cys) + AMP + diphosphate. This Mycobacterium sp. (strain KMS) protein is Cysteine--tRNA ligase.